The chain runs to 248 residues: ATP synthase delta chain, chloroplastic (248 aa).

Residues Met1–Lys60 constitute a chloroplast transit peptide.

This sequence belongs to the ATPase delta chain family. In terms of assembly, F-type ATPases have 2 components, CF(1) - the catalytic core - and CF(0) - the membrane proton channel. CF(1) has five subunits: alpha(3), beta(3), gamma(1), delta(1), epsilon(1). CF(0) has three main subunits: a, b and c.

It localises to the plastid. Its subcellular location is the chloroplast thylakoid membrane. In terms of biological role, this protein seems to be part of the stalk that links CF(0) to CF(1). It either transmits conformational changes from CF(0) into CF(1) or is implicated in proton conduction. This is ATP synthase delta chain, chloroplastic (ATPD) from Nicotiana tabacum (Common tobacco).